The primary structure comprises 279 residues: Shikimate dehydrogenase (NADP(+)) (279 aa).

Shikimate is bound by residues 17-19 (SLS) and T64. The active-site Proton acceptor is the K68. D80 contributes to the NADP(+) binding site. Residues N89 and D105 each contribute to the shikimate site. NADP(+)-binding positions include 129 to 133 (GAGGS), 153 to 158 (NRTAKK), and L221. Y223 contacts shikimate. G245 lines the NADP(+) pocket.

The protein belongs to the shikimate dehydrogenase family. As to quaternary structure, homodimer.

The catalysed reaction is shikimate + NADP(+) = 3-dehydroshikimate + NADPH + H(+). Its pathway is metabolic intermediate biosynthesis; chorismate biosynthesis; chorismate from D-erythrose 4-phosphate and phosphoenolpyruvate: step 4/7. Involved in the biosynthesis of the chorismate, which leads to the biosynthesis of aromatic amino acids. Catalyzes the reversible NADPH linked reduction of 3-dehydroshikimate (DHSA) to yield shikimate (SA). This chain is Shikimate dehydrogenase (NADP(+)), found in Idiomarina loihiensis (strain ATCC BAA-735 / DSM 15497 / L2-TR).